The sequence spans 54 residues: Large ribosomal subunit protein bL33B (54 aa).

This sequence belongs to the bacterial ribosomal protein bL33 family.

This Saccharopolyspora erythraea (strain ATCC 11635 / DSM 40517 / JCM 4748 / NBRC 13426 / NCIMB 8594 / NRRL 2338) protein is Large ribosomal subunit protein bL33B.